Reading from the N-terminus, the 231-residue chain is Large ribosomal subunit protein uL1 (231 aa).

The protein belongs to the universal ribosomal protein uL1 family. In terms of assembly, part of the 50S ribosomal subunit.

In terms of biological role, binds directly to 23S rRNA. The L1 stalk is quite mobile in the ribosome, and is involved in E site tRNA release. Its function is as follows. Protein L1 is also a translational repressor protein, it controls the translation of the L11 operon by binding to its mRNA. This is Large ribosomal subunit protein uL1 from Neisseria meningitidis serogroup C (strain 053442).